The following is a 593-amino-acid chain: Serine/threonine-protein kinase PAK 4 (593 aa).

Positions 11 to 24 constitute a CRIB domain; sequence ISAPSNFEHRVHTG. A linker region spans residues 25 to 322; the sequence is FDQHEQKFTG…VVDPGDPRSY (298 aa). Ser-41 is modified (phosphoserine). At Lys-78 the chain carries N6-methyllysine. Residues 95-303 are disordered; the sequence is TRSNSLRRES…PQREPQRVSH (209 aa). Position 104 is a phosphoserine (Ser-104). Residues 118 to 133 are compositionally biased toward basic and acidic residues; it reads LEERAAPARMAPDKAG. The residue at position 148 (Ser-148) is a Phosphoserine. Residues 149 to 164 show a composition bias toward basic and acidic residues; sequence GDRRRVGPEKRPKSSR. Ser-181 carries the phosphoserine modification. The segment covering 184-197 has biased composition (polar residues); the sequence is DVSTPQPGSLTSGT. Thr-187 is modified (phosphothreonine). Ser-195 bears the Phosphoserine mark. A Phosphothreonine modification is found at Thr-207. A compositionally biased stretch (low complexity) spans 238-258; sequence AAPQSSSSSRPPTRARGAPSP. Residues Ser-257 and Ser-266 each carry the phosphoserine modification. A compositionally biased stretch (low complexity) spans 267–280; the sequence is EPQLAPPARALAAP. Over residues 281 to 292 the composition is skewed to pro residues; sequence AVPPAPGPPGPR. Ser-293 is subject to Phosphoserine. Residues 294-303 are compositionally biased toward basic and acidic residues; that stretch reads PQREPQRVSH. One can recognise a Protein kinase domain in the interval 323-574; sequence LDNFIKIGEG…AAELLKHPFL (252 aa). ATP is bound by residues 329-337 and Lys-352; that span reads IGEGSTGIV. Residue Asp-442 is the Proton acceptor of the active site. Position 476 is a phosphoserine; by autocatalysis (Ser-476).

This sequence belongs to the protein kinase superfamily. STE Ser/Thr protein kinase family. STE20 subfamily. Interacts tightly with GTP-bound but not GDP-bound CDC42/p21 and weakly with RAC1. Interacts with FGFR2 and GRB2. Interacts with INKA1. Interacts with SH3RF2. Interacts with RHOU and PAXI; the PAK4-RHOU complex protects RHOU from ubiquitination and acts as a scaffold to suppport paxillin/PAXI phosphorylation. Post-translationally, autophosphorylated on serine residues when activated by CDC42/p21. Phosphorylated on tyrosine residues upon stimulation of FGFR2. Methylated by SETD6. In terms of processing, polyubiquitinated, leading to its proteasomal degradation.

The protein resides in the cytoplasm. It catalyses the reaction L-seryl-[protein] + ATP = O-phospho-L-seryl-[protein] + ADP + H(+). It carries out the reaction L-threonyl-[protein] + ATP = O-phospho-L-threonyl-[protein] + ADP + H(+). Its activity is regulated as follows. Inhibited by INKA1; which inhibits the serine/threonine-protein kinase activity by binding PAK4 in a substrate-like manner. In terms of biological role, serine/threonine protein kinase that plays a role in a variety of different signaling pathways including cytoskeleton regulation, cell migration, growth, proliferation or cell survival. Activation by various effectors including growth factor receptors or active CDC42 and RAC1 results in a conformational change and a subsequent autophosphorylation on several serine and/or threonine residues. Phosphorylates and inactivates the protein phosphatase SSH1, leading to increased inhibitory phosphorylation of the actin binding/depolymerizing factor cofilin. Decreased cofilin activity may lead to stabilization of actin filaments. Phosphorylates LIMK1, a kinase that also inhibits the activity of cofilin. Phosphorylates integrin beta5/ITGB5 and thus regulates cell motility. Phosphorylates ARHGEF2 and activates the downstream target RHOA that plays a role in the regulation of assembly of focal adhesions and actin stress fibers. Stimulates cell survival by phosphorylating the BCL2 antagonist of cell death BAD. Alternatively, inhibits apoptosis by preventing caspase-8 binding to death domain receptors in a kinase independent manner. Plays a role in cell-cycle progression by controlling levels of the cell-cycle regulatory protein CDKN1A and by phosphorylating RAN. Promotes kinase-independent stabilization of RHOU, thereby contributing to focal adhesion disassembly during cell migration. This is Serine/threonine-protein kinase PAK 4 from Mus musculus (Mouse).